The sequence spans 70 residues: Conotoxin Mr3.8 (70 aa).

The first 24 residues, 1 to 24 (MLKMGVVLFIFLVLFPLATLQLDA), serve as a signal peptide directing secretion. Residues 25 to 54 (DQPVERYAKNKQLFNPHKRRGIILRAPGKR) constitute a propeptide that is removed on maturation. 3 disulfides stabilise this stretch: Cys-55–Cys-67, Cys-56–Cys-68, and Cys-61–Cys-65.

This sequence belongs to the conotoxin M superfamily. In terms of tissue distribution, expressed by the venom duct.

The protein localises to the secreted. In terms of biological role, in vitro, inhibits proliferation of the mice ovarian cancer cells ID8. The chain is Conotoxin Mr3.8 from Conus marmoreus (Marble cone).